We begin with the raw amino-acid sequence, 182 residues long: Large ribosomal subunit protein bL25 (182 aa).

This sequence belongs to the bacterial ribosomal protein bL25 family. CTC subfamily. Part of the 50S ribosomal subunit; part of the 5S rRNA/L5/L18/L25 subcomplex. Contacts the 5S rRNA. Binds to the 5S rRNA independently of L5 and L18.

Functionally, this is one of the proteins that binds to the 5S RNA in the ribosome where it forms part of the central protuberance. This chain is Large ribosomal subunit protein bL25, found in Borrelia turicatae (strain 91E135).